The primary structure comprises 208 residues: Outer-membrane lipoprotein carrier protein (208 aa).

The N-terminal stretch at 1 to 21 is a signal peptide; sequence MKKLNTLLLVLGSLVATPSFA. The disordered stretch occupies residues 188–208; sequence KSTFEFTPPEGVEIDDQSNGE. Residues 199-208 are compositionally biased toward acidic residues; the sequence is VEIDDQSNGE.

The protein belongs to the LolA family. In terms of assembly, monomer.

Its subcellular location is the periplasm. Its function is as follows. Participates in the translocation of lipoproteins from the inner membrane to the outer membrane. Only forms a complex with a lipoprotein if the residue after the N-terminal Cys is not an aspartate (The Asp acts as a targeting signal to indicate that the lipoprotein should stay in the inner membrane). The sequence is that of Outer-membrane lipoprotein carrier protein from Pseudoalteromonas translucida (strain TAC 125).